Consider the following 335-residue polypeptide: Acetyl-coenzyme A carboxylase carboxyl transferase subunit alpha (335 aa).

The region spanning 40 to 294 (QLETLAARRR…KEAIEKHLNA (255 aa)) is the CoA carboxyltransferase C-terminal domain.

Belongs to the AccA family. Acetyl-CoA carboxylase is a heterohexamer composed of biotin carboxyl carrier protein (AccB), biotin carboxylase (AccC) and two subunits each of ACCase subunit alpha (AccA) and ACCase subunit beta (AccD).

The protein localises to the cytoplasm. It catalyses the reaction N(6)-carboxybiotinyl-L-lysyl-[protein] + acetyl-CoA = N(6)-biotinyl-L-lysyl-[protein] + malonyl-CoA. The protein operates within lipid metabolism; malonyl-CoA biosynthesis; malonyl-CoA from acetyl-CoA: step 1/1. Its function is as follows. Component of the acetyl coenzyme A carboxylase (ACC) complex. First, biotin carboxylase catalyzes the carboxylation of biotin on its carrier protein (BCCP) and then the CO(2) group is transferred by the carboxyltransferase to acetyl-CoA to form malonyl-CoA. This chain is Acetyl-coenzyme A carboxylase carboxyl transferase subunit alpha, found in Prochlorococcus marinus (strain MIT 9301).